Reading from the N-terminus, the 356-residue chain is Ferrochelatase (356 aa).

The Fe cation site is built by His-214 and Glu-295.

This sequence belongs to the ferrochelatase family.

The protein localises to the cytoplasm. The enzyme catalyses heme b + 2 H(+) = protoporphyrin IX + Fe(2+). It functions in the pathway porphyrin-containing compound metabolism; protoheme biosynthesis; protoheme from protoporphyrin-IX: step 1/1. Catalyzes the ferrous insertion into protoporphyrin IX. This is Ferrochelatase from Paraburkholderia xenovorans (strain LB400).